Here is an 850-residue protein sequence, read N- to C-terminus: MEPLKNLFLKSPLGSWNGSGSGGGGGSGGVRPEGSPKATAAYANPVWTALFDYEPNGQDELALRKGDRVEVLSRDAAISGDEGWWAGQVGGQVGIFPSNYVSRGGGPPPCEVASFQELRLEEVIGIGGFGKVYRGSWRGELVAVKAARQDPDEDISVTAESVRQEARLFAMLAHPNIIALKAVCLEEPNLCLVMEYAAGGPLSRALAGRRVPPHVLVNWAVQIARGMHYLHCEALVPVIHRDLKSNNILLLQPIEGDDMEHKTLKITDFGLAREWHKTTQMSAAGTYAWMAPEVIKASTFSKGSDVWSFGVLLWELLTGEVPYRGIDCLAVAYGVAVNKLTLPIPSTCPEPFAQLMADCWAQDPHRRPDFASILQQLEALEAQVLREMPRDSFHSMQEGWKREIQGLFDELRAKEKELLSREEELTRAAREQRSQAEQLRRREHLLAQWELEVFERELTLLLQQVDRERPHVRRRRGTFKRSKLRARDGGERISMPLDFKHRITVQASPGLDRRRNVFEVGAGDSPTFPRFRAIQLEPAESGQTWGRQSPRRLDDSSNGERRACWAWGPSSPKPGEAQNGRRRSRMDEATWYLDSDDSSPLGSPSTPPALNGNPPRPSPEPEEPRRSGPTERGNSSGTPKLIQRALLRGTALLASLGLGRDLQPPGGLSRERGESPTAPPPAQMASPCPPDLPSTPLIHLSQATPDARGPLTPAPLLLDLGVSSGQPSAKSPRREETRGRTVSPPPGISRSAPGTPGTPRSPPLGLISRPRPSPLRNRIDPWSFVSAGPRPSPLPSPQPAPRRAPWTLFPDSDPFWDSPPANPFRGGSQDCRTQTKDVGAQAPWAPEAGP.

Serine 11 carries the post-translational modification Phosphoserine. Residues 18-31 (GSGSGGGGGSGGVR) show a composition bias toward gly residues. The interval 18–37 (GSGSGGGGGSGGVRPEGSPK) is disordered. A Phosphoserine modification is found at serine 35. The SH3 domain maps to 42 to 106 (YANPVWTALF…PSNYVSRGGG (65 aa)). Positions 118–380 (LRLEEVIGIG…ASILQQLEAL (263 aa)) constitute a Protein kinase domain. Residues 124–132 (IGIGGFGKV) and lysine 145 each bind ATP. Aspartate 242 (proton acceptor) is an active-site residue. Threonine 278 is subject to Phosphothreonine; by autocatalysis. Phosphoserine; by autocatalysis and MAP4K1 is present on serine 282. Phosphoserine is present on serine 395. Leucine-zipper regions lie at residues 404–425 (IQGLFDELRAKEKELLSREEEL) and 439–460 (LRRREHLLAQWELEVFERELTL). Residues serine 508, serine 525, serine 549, serine 556, and serine 557 each carry the phosphoserine modification. Positions 536–850 (LEPAESGQTW…QAPWAPEAGP (315 aa)) are disordered. The span at 551-563 (RRLDDSSNGERRA) shows a compositional bias: basic and acidic residues. The segment covering 598–610 (SSPLGSPSTPPAL) has biased composition (low complexity). At serine 655 the chain carries Phosphoserine. The segment covering 677 to 693 (TAPPPAQMASPCPPDLP) has biased composition (pro residues). At threonine 712 the chain carries Phosphothreonine. A phosphoserine mark is found at serine 728, serine 731, serine 743, serine 751, serine 761, serine 773, serine 792, serine 796, and serine 818. Over residues 790–802 (RPSPLPSPQPAPR) the composition is skewed to pro residues. Residues 803 to 819 (RAPWTLFPDSDPFWDSP) are compositionally biased toward low complexity.

This sequence belongs to the protein kinase superfamily. STE Ser/Thr protein kinase family. MAP kinase kinase kinase subfamily. As to quaternary structure, homodimer; undergoes dimerization during activation. Interacts with MAP2K4/MKK4. Interacts with MAP2K7/MKK7. Found in a complex with SH3RF1, RAC1, MAP2K7/MKK7, MAPK8IP1/JIP1 and MAPK8/JNK1. It depends on Mg(2+) as a cofactor. Post-translationally, autophosphorylation on serine and threonine residues within the activation loop plays a role in enzyme activation. Thr-278 is likely to be the main autophosphorylation site. Phosphorylation of Ser-556 and Ser-557 is induced by CDC42.

It is found in the cytoplasm. Its subcellular location is the cytoskeleton. The protein localises to the microtubule organizing center. It localises to the centrosome. It catalyses the reaction L-seryl-[protein] + ATP = O-phospho-L-seryl-[protein] + ADP + H(+). The enzyme catalyses L-threonyl-[protein] + ATP = O-phospho-L-threonyl-[protein] + ADP + H(+). Homodimerization via the leucine zipper domains is required for autophosphorylation and subsequent activation. In terms of biological role, activates the JUN N-terminal pathway. Required for serum-stimulated cell proliferation and for mitogen and cytokine activation of MAPK14 (p38), MAPK3 (ERK) and MAPK8 (JNK1) through phosphorylation and activation of MAP2K4/MKK4 and MAP2K7/MKK7. Plays a role in mitogen-stimulated phosphorylation and activation of BRAF, but does not phosphorylate BRAF directly. Influences microtubule organization during the cell cycle. The chain is Mitogen-activated protein kinase kinase kinase 11 (Map3k11) from Rattus norvegicus (Rat).